The primary structure comprises 339 residues: Glycerol-3-phosphate dehydrogenase [NAD(P)+] (339 aa).

Positions 15, 16, 36, and 110 each coordinate NADPH. 3 residues coordinate sn-glycerol 3-phosphate: K110, G144, and S146. A148 serves as a coordination point for NADPH. Sn-glycerol 3-phosphate contacts are provided by K199, D252, S262, R263, and N264. K199 serves as the catalytic Proton acceptor. R263 serves as a coordination point for NADPH. V287 and E289 together coordinate NADPH.

The protein belongs to the NAD-dependent glycerol-3-phosphate dehydrogenase family.

It is found in the cytoplasm. It catalyses the reaction sn-glycerol 3-phosphate + NAD(+) = dihydroxyacetone phosphate + NADH + H(+). The enzyme catalyses sn-glycerol 3-phosphate + NADP(+) = dihydroxyacetone phosphate + NADPH + H(+). Its pathway is membrane lipid metabolism; glycerophospholipid metabolism. Catalyzes the reduction of the glycolytic intermediate dihydroxyacetone phosphate (DHAP) to sn-glycerol 3-phosphate (G3P), the key precursor for phospholipid synthesis. The protein is Glycerol-3-phosphate dehydrogenase [NAD(P)+] of Desulfotalea psychrophila (strain LSv54 / DSM 12343).